A 134-amino-acid chain; its full sequence is Large ribosomal subunit protein eL32 (134 aa).

Belongs to the eukaryotic ribosomal protein eL32 family.

This Apis mellifera (Honeybee) protein is Large ribosomal subunit protein eL32 (RpL32).